The sequence spans 282 residues: U1 small nuclear ribonucleoprotein A (282 aa).

Alanine 2 bears the N-acetylalanine mark. Residues 10–89 (HTIYINNLNE…KPMRIQYAKT (80 aa)) form the RRM 1 domain. The residue at position 60 (lysine 60) is an N6-acetyllysine. Positions 100–132 (TFVERDRKREKRKPKSQETPATKKAVQGGGATP) are disordered. A Phosphothreonine modification is found at threonine 131. Position 152 is an omega-N-methylarginine (arginine 152). Residues 208–282 (HILFLTNLPE…NAMKISFAKK (75 aa)) enclose the RRM 2 domain.

This sequence belongs to the RRM U1 A/B'' family. As to quaternary structure, U1 snRNP is composed of the 7 core Sm proteins SNRPB, SNRPD1, SNRPD2, SNRPD3, SNRPE, SNRPF and SNRPG that assemble in a heptameric protein ring on the Sm site of the small nuclear RNA to form the core snRNP, and at least three U1 snRNP-specific proteins SNRNP70/U1-70K, SNRPA/U1-A and SNRPC/U1-C. Interacts with SFPQ; component of a snRNP-free complex with SFPQ. Interacts with IVNS1ABP (via BACK domain); the interaction is indirect.

The protein localises to the nucleus. Component of the spliceosomal U1 snRNP, which is essential for recognition of the pre-mRNA 5' splice-site and the subsequent assembly of the spliceosome. U1 snRNP is the first snRNP to interact with pre-mRNA. This interaction is required for the subsequent binding of U2 snRNP and the U4/U6/U5 tri-snRNP. SNRPA binds stem loop II of U1 snRNA. In a snRNP-free form (SF-A) may be involved in coupled pre-mRNA splicing and polyadenylation process. May bind preferentially to the 5'-UGCAC-3' motif on RNAs. This is U1 small nuclear ribonucleoprotein A (SNRPA) from Homo sapiens (Human).